Consider the following 122-residue polypeptide: MIQQESRLKVADNSGARELLTIKVLGGSGRKYANIGDIIVATVKQATPGGVVKKGDVVKAVVVRTKSGARRPDGSYIRFDENAAVIIKDDKSPRGTRIFGPVARELRDSNFMKIVSLAPEVL.

The protein belongs to the universal ribosomal protein uL14 family. In terms of assembly, part of the 50S ribosomal subunit. Forms a cluster with proteins L3 and L19. In the 70S ribosome, L14 and L19 interact and together make contacts with the 16S rRNA in bridges B5 and B8.

In terms of biological role, binds to 23S rRNA. Forms part of two intersubunit bridges in the 70S ribosome. The chain is Large ribosomal subunit protein uL14 from Bacillus cytotoxicus (strain DSM 22905 / CIP 110041 / 391-98 / NVH 391-98).